We begin with the raw amino-acid sequence, 250 residues long: uncharacterized protein (250 aa).

A helical membrane pass occupies residues 2-22 (ILRIIIFVIIILVVSLLLIYF).

The protein resides in the membrane. This is an uncharacterized protein from Acanthamoeba polyphaga (Amoeba).